We begin with the raw amino-acid sequence, 279 residues long: MAFNSQPIEGWHGKLDLVYADRSNSTQLIYNHQQAPLKVQRPFYPEGEKVCHSVILHTAGGVVGGDRLSYNLHLQPNAQALITTAAAGKIYRSEGLQARQTIDIKIDAGACLEWLPQETILFNGAIYRQDLRVELATGANFLGWEITRFGRSARGEKFYQGEWRSHTEIWRQGVPLWIDRQWLPGNEAVFHSPHGLAGQPIVGSLVWLGSAVSTEIIAKARNLGNTQGEKGVTSLENGFLCRYRGASTSEVRNWFTDVWQLLRVEFFSRSKCTPRVWQT.

Belongs to the UreD family. As to quaternary structure, ureD, UreF and UreG form a complex that acts as a GTP-hydrolysis-dependent molecular chaperone, activating the urease apoprotein by helping to assemble the nickel containing metallocenter of UreC. The UreE protein probably delivers the nickel.

It is found in the cytoplasm. Functionally, required for maturation of urease via the functional incorporation of the urease nickel metallocenter. The chain is Urease accessory protein UreD from Trichormus variabilis (strain ATCC 29413 / PCC 7937) (Anabaena variabilis).